Consider the following 73-residue polypeptide: MSFKKLTNVWNVQEQLSLSNATYNKNLELEKRLAKIRNEIPNKSKLIATKVDVSTQTKTVKKFTKRGFKKVLI.

The stretch at 20-49 (NATYNKNLELEKRLAKIRNEIPNKSKLIAT) forms a coiled coil.

This is an uncharacterized protein from Acheta domesticus (House cricket).